The sequence spans 203 residues: uncharacterized protein (203 aa).

This sequence belongs to the DadA oxidoreductase family.

In terms of biological role, either a functional dehydrogenase or a non-functional fragment. This is an uncharacterized protein from Sinorhizobium fredii (strain NBRC 101917 / NGR234).